Reading from the N-terminus, the 347-residue chain is Protein phosphatase 1 regulatory subunit 3G (347 aa).

Residues 1–77 (MDPSGEQLHR…ELQEYRRSRA (77 aa)) form a disordered region. The segment covering 13–22 (ASSSTSSGDP) has biased composition (polar residues). Position 81 is a phosphoserine (Ser81). Residues 200 to 339 (EERLRRQRVC…NNEGANYTLR (140 aa)) form the CBM21 domain. A disordered region spans residues 258-286 (DPESVEPLPPLQSGDSGSKAEDSEEGPGT).

Glycogen-targeting subunit for protein phosphatase 1 (PP1). Involved in the regulation of hepatic glycogenesis in a manner coupled to the fasting-feeding cycle and distinct from other glycogen-targeting subunits. The sequence is that of Protein phosphatase 1 regulatory subunit 3G (Ppp1r3g) from Mus musculus (Mouse).